Here is a 294-residue protein sequence, read N- to C-terminus: Protein RarD (294 aa).

The Cytoplasmic segment spans residues methionine 1–leucine 11. Residues leucine 12 to proline 34 traverse the membrane as a helical segment. In terms of domain architecture, EamA spans phenylalanine 18–tryptophan 145. Residues alanine 35–glutamate 37 are Periplasmic-facing. The helical transmembrane segment at isoleucine 38 to tryptophan 60 threads the bilayer. Topologically, residues arginine 61 to lysine 72 are cytoplasmic. A helical membrane pass occupies residues isoleucine 73–asparagine 95. Over asparagine 96 to methionine 99 the chain is Periplasmic. The chain crosses the membrane as a helical span at residues leucine 100–glycine 122. The Cytoplasmic portion of the chain corresponds to glutamate 123 to methionine 128. Residues glutamine 129–threonine 146 form a helical membrane-spanning segment. Topologically, residues phenylalanine 147–serine 149 are periplasmic. A helical transmembrane segment spans residues leucine 150–valine 167. At arginine 168 to methionine 179 the chain is on the cytoplasmic side. The chain crosses the membrane as a helical span at residues leucine 180 to isoleucine 197. The Periplasmic segment spans residues alanine 198–serine 211. A helical transmembrane segment spans residues leucine 212 to alanine 234. Topologically, residues threonine 235–arginine 238 are cytoplasmic. A helical transmembrane segment spans residues leucine 239–tyrosine 261. The Periplasmic portion of the chain corresponds to glycine 262 to methionine 270. A helical membrane pass occupies residues valine 271 to threonine 290. Residues glutamine 291–lysine 294 are Cytoplasmic-facing.

Belongs to the EamA transporter family.

Its subcellular location is the cell inner membrane. The sequence is that of Protein RarD (rarD) from Salmonella typhimurium (strain LT2 / SGSC1412 / ATCC 700720).